A 203-amino-acid polypeptide reads, in one-letter code: NAD(P)H-quinone oxidoreductase subunit M, chloroplastic (203 aa).

Residues methionine 1 to glycine 21 constitute a chloroplast transit peptide. The segment covering serine 34–asparagine 48 has biased composition (low complexity). Residues serine 34–proline 61 form a disordered region.

This sequence belongs to the NDH complex subunit M family. Part of the chloroplast NDH complex, composed of a mixture of chloroplast and nucleus encoded subunits. Component of the NDH subcomplex A, at least composed of ndhH, ndhI, ndhJ, ndhK, ndhL, ndhM, ndhN and ndhO.

It is found in the plastid. Its subcellular location is the chloroplast thylakoid membrane. It carries out the reaction a plastoquinone + NADH + (n+1) H(+)(in) = a plastoquinol + NAD(+) + n H(+)(out). The catalysed reaction is a plastoquinone + NADPH + (n+1) H(+)(in) = a plastoquinol + NADP(+) + n H(+)(out). NDH shuttles electrons from NAD(P)H:plastoquinone, via FMN and iron-sulfur (Fe-S) centers, to quinones in the photosynthetic chain and possibly in a chloroplast respiratory chain. The immediate electron acceptor for the enzyme in this species is believed to be plastoquinone. Couples the redox reaction to proton translocation, and thus conserves the redox energy in a proton gradient. In Populus jackii (Balm of Gilead), this protein is NAD(P)H-quinone oxidoreductase subunit M, chloroplastic.